A 338-amino-acid chain; its full sequence is Popeye domain-containing protein 1-A (338 aa).

The Extracellular segment spans residues Met1–His40. Asn21 and Asn29 each carry an N-linked (GlcNAc...) asparagine glycan. A helical membrane pass occupies residues His41–Leu61. Topologically, residues Asn62–Met65 are cytoplasmic. The helical transmembrane segment at Leu66 to Phe86 threads the bilayer. The Extracellular segment spans residues Arg87 to Asp91. The chain crosses the membrane as a helical span at residues Ile92–Tyr112. The Cytoplasmic portion of the chain corresponds to Lys113 to Cys338. A disordered region spans residues Thr296–Arg317. Residues Leu307–Arg317 show a composition bias toward polar residues.

The protein belongs to the popeye family. As to expression, expressed in the heart.

The protein localises to the lateral cell membrane. The protein resides in the cell junction. It is found in the tight junction. Its subcellular location is the membrane. Its function is as follows. Cell adhesion molecule involved in the establishment and/or maintenance of cell integrity. Plays a role in vamp3-mediated vesicular transport and recycling of different receptor molecules. May be involved in the formation and regulation of the tight junction (TJ) paracellular permeability barrier in epithelial cells. May induce primordial adhesive contact and aggregation of epithelial cells in a Ca(2+)-independent manner. May be involved in epithelial movement during corneal sheet formation and regeneration. May play a role in the regulation of cell shape and movement by modulating the Rho-GTPase activity. May also be involved in striated muscle regeneration and in the regulation of cell spreading. This is Popeye domain-containing protein 1-A (popdc1-a) from Xenopus laevis (African clawed frog).